Reading from the N-terminus, the 502-residue chain is Protein DETOXIFICATION 7 (502 aa).

The next 12 helical transmembrane spans lie at 36-56 (MAAP…ISMV), 68-88 (AVAI…VGFA), 112-132 (YSSM…WFFM), 143-163 (PLIS…LFGF), 182-202 (LFVS…LLVY), 208-228 (IVGA…LLWI), 262-282 (AMMI…SGLL), 291-311 (VISI…AIGA), 331-351 (AAVN…TITL), 375-395 (ITPI…LSGV), 408-428 (ASLG…CFVM), and 436-456 (WIGI…VTFF).

Belongs to the multi antimicrobial extrusion (MATE) (TC 2.A.66.1) family.

It localises to the membrane. In Arabidopsis thaliana (Mouse-ear cress), this protein is Protein DETOXIFICATION 7.